We begin with the raw amino-acid sequence, 1020 residues long: Protein CLASP-2 (1020 aa).

A compositionally biased stretch (low complexity) spans 259–271; that stretch reads ASDAASSSTSINS. 3 disordered regions span residues 259 to 280, 329 to 387, and 419 to 461; these read ASDAASSSTSINSERGTAPFRS, PMTT…RPSA, and LQKA…ALDT. The span at 329–343 shows a compositional bias: polar residues; it reads PMTTRTLSKIDTSPG. The span at 372-381 shows a compositional bias: low complexity; the sequence is SQPGSRNGSP. Residues 450–460 show a composition bias toward polar residues; it reads QKATPQKSALD. The stretch at 954–992 is one HEAT repeat; it reads LAPCVIKSYDSPSSAVRKTAVYCLVAMVNKLGMKTMEPH.

The protein belongs to the CLASP family. As to quaternary structure, interacts with hcp-1 and hcp-2.

It is found in the cytoplasm. Its subcellular location is the cytoskeleton. It localises to the microtubule organizing center. The protein resides in the centrosome. The protein localises to the chromosome. It is found in the centromere. Its subcellular location is the kinetochore. It localises to the spindle. Probable microtubule plus-end tracking protein that promotes the stabilization of dynamic microtubules. Required for the formation of mitotic and meiotic spindles. Specifically promotes the polymerization of kinetochore-bound microtubules. Also required for cytoplasmic streaming. Essential for embryonic development. This is Protein CLASP-2 (cls-2) from Caenorhabditis elegans.